The sequence spans 436 residues: tRNA-2-methylthio-N(6)-dimethylallyladenosine synthase (436 aa).

Residues 5 to 121 (RKLFIKTYGC…LPDMLDRTEG (117 aa)) enclose the MTTase N-terminal domain. [4Fe-4S] cluster contacts are provided by Cys-14, Cys-50, Cys-84, Cys-158, Cys-162, and Cys-165. In terms of domain architecture, Radical SAM core spans 144-374 (ATRGPAAFLT…TEQQRAAQMA (231 aa)). The region spanning 373–435 (MAMVGREVGV…PNSLAGERLG (63 aa)) is the TRAM domain.

This sequence belongs to the methylthiotransferase family. MiaB subfamily. As to quaternary structure, monomer. It depends on [4Fe-4S] cluster as a cofactor.

It is found in the cytoplasm. The catalysed reaction is N(6)-dimethylallyladenosine(37) in tRNA + (sulfur carrier)-SH + AH2 + 2 S-adenosyl-L-methionine = 2-methylsulfanyl-N(6)-dimethylallyladenosine(37) in tRNA + (sulfur carrier)-H + 5'-deoxyadenosine + L-methionine + A + S-adenosyl-L-homocysteine + 2 H(+). Its function is as follows. Catalyzes the methylthiolation of N6-(dimethylallyl)adenosine (i(6)A), leading to the formation of 2-methylthio-N6-(dimethylallyl)adenosine (ms(2)i(6)A) at position 37 in tRNAs that read codons beginning with uridine. In Cereibacter sphaeroides (strain ATCC 17029 / ATH 2.4.9) (Rhodobacter sphaeroides), this protein is tRNA-2-methylthio-N(6)-dimethylallyladenosine synthase.